The following is a 191-amino-acid chain: Large ribosomal subunit protein bL9 (191 aa).

The interval 150-191 is disordered; it reads EAERQAKGESLTSADAIYGVDEDALRPEDFFDPDADRDGDDE. Residues 179–191 are compositionally biased toward acidic residues; the sequence is FFDPDADRDGDDE.

Belongs to the bacterial ribosomal protein bL9 family.

In terms of biological role, binds to the 23S rRNA. The protein is Large ribosomal subunit protein bL9 of Allorhizobium ampelinum (strain ATCC BAA-846 / DSM 112012 / S4) (Agrobacterium vitis (strain S4)).